Here is a 315-residue protein sequence, read N- to C-terminus: Methionyl-tRNA formyltransferase (315 aa).

113–116 (SLLP) is a (6S)-5,6,7,8-tetrahydrofolate binding site.

The protein belongs to the Fmt family.

It carries out the reaction L-methionyl-tRNA(fMet) + (6R)-10-formyltetrahydrofolate = N-formyl-L-methionyl-tRNA(fMet) + (6S)-5,6,7,8-tetrahydrofolate + H(+). Functionally, attaches a formyl group to the free amino group of methionyl-tRNA(fMet). The formyl group appears to play a dual role in the initiator identity of N-formylmethionyl-tRNA by promoting its recognition by IF2 and preventing the misappropriation of this tRNA by the elongation apparatus. This is Methionyl-tRNA formyltransferase from Pectobacterium carotovorum subsp. carotovorum (strain PC1).